We begin with the raw amino-acid sequence, 113 residues long: Large ribosomal subunit protein eL31A (113 aa).

This sequence belongs to the eukaryotic ribosomal protein eL31 family. As to quaternary structure, component of the large ribosomal subunit (LSU). Mature yeast ribosomes consist of a small (40S) and a large (60S) subunit. The 40S small subunit contains 1 molecule of ribosomal RNA (18S rRNA) and 33 different proteins (encoded by 57 genes). The large 60S subunit contains 3 rRNA molecules (25S, 5.8S and 5S rRNA) and 46 different proteins (encoded by 81 genes).

It localises to the cytoplasm. In terms of biological role, component of the ribosome, a large ribonucleoprotein complex responsible for the synthesis of proteins in the cell. The small ribosomal subunit (SSU) binds messenger RNAs (mRNAs) and translates the encoded message by selecting cognate aminoacyl-transfer RNA (tRNA) molecules. The large subunit (LSU) contains the ribosomal catalytic site termed the peptidyl transferase center (PTC), which catalyzes the formation of peptide bonds, thereby polymerizing the amino acids delivered by tRNAs into a polypeptide chain. The nascent polypeptides leave the ribosome through a tunnel in the LSU and interact with protein factors that function in enzymatic processing, targeting, and the membrane insertion of nascent chains at the exit of the ribosomal tunnel. The protein is Large ribosomal subunit protein eL31A of Saccharomyces cerevisiae (strain ATCC 204508 / S288c) (Baker's yeast).